The sequence spans 509 residues: Histidine--tRNA ligase, cytoplasmic (509 aa).

Residue A2 is modified to N-acetylalanine. One can recognise a WHEP-TRS domain in the interval 3-59 (ERAALEELVKLQGERVRGLKQQKASAELIEEEVAKLLKLKAQLGPDESKQKFVLKTP). S66 is modified (phosphoserine). Residues 130–132 (DLT), R157, Q173, D177, R326, and 330–331 (YY) each bind L-histidine. A Phosphoserine modification is found at S356.

The protein belongs to the class-II aminoacyl-tRNA synthetase family. In terms of assembly, homodimer. In terms of tissue distribution, brain, heart, liver and kidney.

The protein resides in the cytoplasm. The enzyme catalyses tRNA(His) + L-histidine + ATP = L-histidyl-tRNA(His) + AMP + diphosphate + H(+). Catalyzes the ATP-dependent ligation of histidine to the 3'-end of its cognate tRNA, via the formation of an aminoacyl-adenylate intermediate (His-AMP). Plays a role in axon guidance. The polypeptide is Histidine--tRNA ligase, cytoplasmic (Homo sapiens (Human)).